A 346-amino-acid polypeptide reads, in one-letter code: Elongation factor Ts (346 aa).

The interval T80 to V83 is involved in Mg(2+) ion dislocation from EF-Tu.

The protein belongs to the EF-Ts family.

The protein resides in the cytoplasm. Functionally, associates with the EF-Tu.GDP complex and induces the exchange of GDP to GTP. It remains bound to the aminoacyl-tRNA.EF-Tu.GTP complex up to the GTP hydrolysis stage on the ribosome. This is Elongation factor Ts from Streptococcus uberis (strain ATCC BAA-854 / 0140J).